The following is a 523-amino-acid chain: Ubiquilin (523 aa).

Residues 2 to 77 (VKINIKSSTD…VHLVKGAAPP (76 aa)) enclose the Ubiquitin-like domain. Residues 70-99 (LVKGAAPPPPPPVEQQVPTPSNTQPQGIPG) are disordered. STI1 domains are found at residues 100–135 (VPQNINDMMNNPMIQEMFNSRMMDSLLDNPDIFRDM) and 139–178 (NPEMREVLNNNPEMAQMLSDPRQLRQSLEMMRNPELMREM). The span at 215–227 (NQQAASQNQTNSN) shows a compositional bias: low complexity. The segment at 215–325 (NQQAASQNQT…ASMFGGGGGG (111 aa)) is disordered. Polar residues predominate over residues 228–241 (PIQTNTDANPNSQP). The segment covering 245 to 278 (PWSTNSSSTSSNPTSSSPSSRPTTGSSTNTGASN) has biased composition (low complexity). Residues 285-296 (SGGGGGMGGGTN) show a composition bias toward gly residues. Over residues 297-310 (NTGTNNTGSTNNTG) the composition is skewed to low complexity. STI1 domains are found at residues 339–380 (DPER…RQMM) and 383–415 (NPQLREAMNNPEFLNMMTNPENMNAMMQLQQAM). Residues 480–523 (PPEQRFRLQLEQLEELGFVDRAANISALTSTNGNINLAIDRLLR) form the UBA domain.

In terms of biological role, stable protein which acts as an antagonist of nosA by repressing cellular differentiation after the tight-aggregate stage, when cells differentiate into two precursor cell types, prespore and prestalk cells, prior to the formation of fruiting bodies. The sequence is that of Ubiquilin (ubqln) from Dictyostelium discoideum (Social amoeba).